The chain runs to 307 residues: Regulating synaptic membrane exocytosis protein 3 (307 aa).

The disordered stretch occupies residues 86 to 120; the sequence is STETGIAVEMRSRVTRQGSRESTDGSTNSNSSEGT. Residues 109–119 show a composition bias toward polar residues; the sequence is DGSTNSNSSEG. The region spanning 155–273 is the C2 domain; that stretch reads PMGDVHIAIM…DLSAAVTGWY (119 aa). 2 positions are modified to phosphoserine: Ser-294 and Ser-297.

Binds PPFIA3. Does not bind RAB3.

It localises to the synapse. Its function is as follows. Regulates synaptic membrane exocytosis. The protein is Regulating synaptic membrane exocytosis protein 3 (Rims3) of Mus musculus (Mouse).